Reading from the N-terminus, the 179-residue chain is Cytochrome b6-f complex iron-sulfur subunit (179 aa).

A helical membrane pass occupies residues 21–43; the sequence is LLTFGSATGVALGMLYPVVRYFI. Residues 61-162 enclose the Rieske domain; sequence GNDISVSDFL…AAVSDDKITF (102 aa). Residues Cys108, His110, Cys126, and His129 each coordinate [2Fe-2S] cluster. Residues Cys113 and Cys128 are joined by a disulfide bond.

It belongs to the Rieske iron-sulfur protein family. In terms of assembly, the 4 large subunits of the cytochrome b6-f complex are cytochrome b6, subunit IV (17 kDa polypeptide, PetD), cytochrome f and the Rieske protein, while the 4 small subunits are PetG, PetL, PetM and PetN. The complex functions as a dimer. [2Fe-2S] cluster is required as a cofactor.

It localises to the cellular thylakoid membrane. It catalyses the reaction 2 oxidized [plastocyanin] + a plastoquinol + 2 H(+)(in) = 2 reduced [plastocyanin] + a plastoquinone + 4 H(+)(out). Its function is as follows. Component of the cytochrome b6-f complex, which mediates electron transfer between photosystem II (PSII) and photosystem I (PSI), cyclic electron flow around PSI, and state transitions. The sequence is that of Cytochrome b6-f complex iron-sulfur subunit from Cyanothece sp. (strain PCC 7425 / ATCC 29141).